A 265-amino-acid polypeptide reads, in one-letter code: Apolipoprotein A-I (265 aa).

Residues 1–18 (MKAVVLTLAVLFLTGSQA) form the signal peptide. 2 tandem repeats follow at residues 67–88 (LKLLDNWDSLTSTFAKVREQLG) and 89–110 (PVTREFWDNLEKETESLRQEMN). Residues 67 to 265 (LKLLDNWDSL…DEASKKLNAQ (199 aa)) form a 10 X approximate tandem repeats region. M109 bears the Methionine sulfoxide mark. A 3; half-length repeat occupies 111 to 121 (KDLQEVKQKVQ). 5 tandem repeats follow at residues 122-142 (PYLDEFQKKWQEELQIYRQKV), 144-165 (PLGEELREGARQKVQELQDKLT), 166-187 (PLAEEMRDRARAHVETLRQQLA), 188-209 (PYSDELRQRMAARFEMLKEGGG), and 210-230 (SLVQYHAKASEQLKALGEKAK). Residues 231 to 241 (PALEDLRQGLL) form a 9; half-length repeat. Copy 10 of the repeat occupies 242–265 (PVLENLKVSILAAIDEASKKLNAQ).

Belongs to the apolipoprotein A1/A4/E family. Homodimer. Interacts with APOA1BP and CLU. Component of a sperm activating protein complex (SPAP), consisting of APOA1, an immunoglobulin heavy chain, an immunoglobulin light chain and albumin. Interacts with NDRG1. Interacts with SCGB3A2. Interacts with NAXE and YJEFN3. In terms of processing, glycosylated. Palmitoylated. Post-translationally, phosphorylation sites are present in the extracellular medium. Major protein of plasma HDL, also found in chylomicrons.

The protein localises to the secreted. In terms of biological role, participates in the reverse transport of cholesterol from tissues to the liver for excretion by promoting cholesterol efflux from tissues and by acting as a cofactor for the lecithin cholesterol acyltransferase (LCAT). As part of the SPAP complex, activates spermatozoa motility. The sequence is that of Apolipoprotein A-I (APOA1) from Balaenoptera acutorostrata scammoni (North Pacific minke whale).